We begin with the raw amino-acid sequence, 208 residues long: Large ribosomal subunit protein bL25 (208 aa).

Belongs to the bacterial ribosomal protein bL25 family. CTC subfamily. In terms of assembly, part of the 50S ribosomal subunit; part of the 5S rRNA/L5/L18/L25 subcomplex. Contacts the 5S rRNA. Binds to the 5S rRNA independently of L5 and L18.

Its function is as follows. This is one of the proteins that binds to the 5S RNA in the ribosome where it forms part of the central protuberance. The protein is Large ribosomal subunit protein bL25 of Paracoccus denitrificans (strain Pd 1222).